Consider the following 389-residue polypeptide: Glutamate 5-kinase (389 aa).

K16 provides a ligand contact to ATP. Residues S56, D143, and N155 each contribute to the substrate site. 175–176 is an ATP binding site; the sequence is SD. The PUA domain maps to 281–358; sequence AGELHVDEGA…AEIEAILGYA (78 aa).

This sequence belongs to the glutamate 5-kinase family.

Its subcellular location is the cytoplasm. The enzyme catalyses L-glutamate + ATP = L-glutamyl 5-phosphate + ADP. It participates in amino-acid biosynthesis; L-proline biosynthesis; L-glutamate 5-semialdehyde from L-glutamate: step 1/2. Catalyzes the transfer of a phosphate group to glutamate to form L-glutamate 5-phosphate. This Rhizobium rhizogenes (strain K84 / ATCC BAA-868) (Agrobacterium radiobacter) protein is Glutamate 5-kinase.